A 391-amino-acid chain; its full sequence is Enoyl-CoA delta isomerase 2 (391 aa).

A mitochondrion-targeting transit peptide spans 1-36 (MAAVTWSRARCWCPSLLQVLRLPVTKLHLGRPAMRA). An ACB domain is found at 37–122 (TQQDFENAMN…VSSLSSSSEA (86 aa)). Position 49 is an N6-acetyllysine; alternate (K49). K49 is subject to N6-succinyllysine; alternate. An N6-succinyllysine modification is found at K53. Residue K60 is modified to N6-acetyllysine; alternate. K60 carries the N6-succinyllysine; alternate modification. 64–68 (YALYK) serves as a coordination point for an acyl-CoA. An N6-succinyllysine mark is found at K68, K79, and K88. Residue K90 is modified to N6-acetyllysine; alternate. At K90 the chain carries N6-succinyllysine; alternate. K90 serves as a coordination point for an acyl-CoA. Position 99 is a phosphoserine (S99). Y109 lines the an acyl-CoA pocket. Position 117 is a phosphoserine (S117). 2 positions are modified to N6-succinyllysine: K127 and K159. An ECH-like region spans residues 149-319 (TKITFNRPSK…AQGLVTEVFP (171 aa)). Position 196 to 200 (196 to 200 (SGNDL)) interacts with substrate. N6-succinyllysine is present on K286. The Microbody targeting signal motif lies at 389 to 391 (PKL).

This sequence in the C-terminal section; belongs to the enoyl-CoA hydratase/isomerase family. As to expression, liver (at protein level).

The protein resides in the peroxisome matrix. It is found in the mitochondrion. It carries out the reaction a (3Z)-enoyl-CoA = a 4-saturated (2E)-enoyl-CoA. The catalysed reaction is a (3E)-enoyl-CoA = a 4-saturated (2E)-enoyl-CoA. It catalyses the reaction (2E)-tetradecenoyl-CoA = (3Z)-tetradecenoyl-CoA. The enzyme catalyses (3E)-tetradecenoyl-CoA = (2E)-tetradecenoyl-CoA. It carries out the reaction (3E)-octenoyl-CoA = (2E)-octenoyl-CoA. The catalysed reaction is (3Z)-octenoyl-CoA = (2E)-octenoyl-CoA. It catalyses the reaction (3E)-nonenoyl-CoA = (2E)-nonenoyl-CoA. It participates in lipid metabolism; fatty acid beta-oxidation. Its function is as follows. Able to isomerize both 3-cis and 3-trans double bonds into the 2-trans form in a range of enoyl-CoA species. Has a preference for 3-trans substrates. The protein is Enoyl-CoA delta isomerase 2 of Rattus norvegicus (Rat).